A 152-amino-acid polypeptide reads, in one-letter code: Proline-rich acidic protein 1 (152 aa).

The N-terminal stretch at 1–20 (MKRFLLATCLVAVLLWEAGA) is a signal peptide.

Interacts with MTTP. Interacts with MAD1L1. Highly expressed in the small intestine where it shows a proximal-distal graded expression.

Its subcellular location is the secreted. The protein resides in the endoplasmic reticulum. In terms of biological role, lipid-binding protein which promotes lipid absorption by facilitating MTTP-mediated lipid transfer (mainly triglycerides and phospholipids) and MTTP-mediated apoB lipoprotein assembly and secretion. Protects the gastrointestinal epithelium from irradiation-induced apoptosis. May play an important role in maintaining normal growth homeostasis in epithelial cells. Involved in p53/TP53-dependent cell survival after DNA damage. The chain is Proline-rich acidic protein 1 (Prap1) from Rattus norvegicus (Rat).